Reading from the N-terminus, the 283-residue chain is ATP synthase gamma chain (283 aa).

It belongs to the ATPase gamma chain family. In terms of assembly, F-type ATPases have 2 components, CF(1) - the catalytic core - and CF(0) - the membrane proton channel. CF(1) has five subunits: alpha(3), beta(3), gamma(1), delta(1), epsilon(1). CF(0) has three main subunits: a, b and c.

Its subcellular location is the cell membrane. In terms of biological role, produces ATP from ADP in the presence of a proton gradient across the membrane. The gamma chain is believed to be important in regulating ATPase activity and the flow of protons through the CF(0) complex. The protein is ATP synthase gamma chain of Desulforamulus reducens (strain ATCC BAA-1160 / DSM 100696 / MI-1) (Desulfotomaculum reducens).